Consider the following 508-residue polypeptide: Heat shock 70 kDa protein 14 (508 aa).

This sequence belongs to the heat shock protein 70 family. As to quaternary structure, component of ribosome-associated complex (RAC).

The protein localises to the cytoplasm. It is found in the cytosol. Functionally, component of the ribosome-associated complex (RAC), a complex involved in folding or maintaining nascent polypeptides in a folding-competent state. The chain is Heat shock 70 kDa protein 14 (hspa14) from Xenopus tropicalis (Western clawed frog).